The primary structure comprises 219 residues: Probable GTP-binding protein EngB (219 aa).

Residues 31–205 (VGVEIAFAGR…LSILNEWCHP (175 aa)) form the EngB-type G domain. GTP is bound by residues 39-46 (GRSNAGKS), 66-70 (GRTQL), 84-87 (DLPG), 151-154 (TKSD), and 184-186 (FSA). Residues serine 46 and threonine 68 each coordinate Mg(2+).

This sequence belongs to the TRAFAC class TrmE-Era-EngA-EngB-Septin-like GTPase superfamily. EngB GTPase family. Mg(2+) serves as cofactor.

Functionally, necessary for normal cell division and for the maintenance of normal septation. This is Probable GTP-binding protein EngB from Shewanella sp. (strain ANA-3).